Here is a 432-residue protein sequence, read N- to C-terminus: Enolase (432 aa).

Residue glutamine 164 participates in (2R)-2-phosphoglycerate binding. The active-site Proton donor is glutamate 206. Residues aspartate 243, glutamate 289, and aspartate 316 each contribute to the Mg(2+) site. (2R)-2-phosphoglycerate is bound by residues lysine 341, arginine 370, serine 371, and lysine 392. Lysine 341 functions as the Proton acceptor in the catalytic mechanism.

This sequence belongs to the enolase family. Mg(2+) is required as a cofactor.

The protein resides in the cytoplasm. It is found in the secreted. The protein localises to the cell surface. It carries out the reaction (2R)-2-phosphoglycerate = phosphoenolpyruvate + H2O. Its pathway is carbohydrate degradation; glycolysis; pyruvate from D-glyceraldehyde 3-phosphate: step 4/5. Catalyzes the reversible conversion of 2-phosphoglycerate (2-PG) into phosphoenolpyruvate (PEP). It is essential for the degradation of carbohydrates via glycolysis. This is Enolase from Borrelia duttonii (strain Ly).